A 166-amino-acid chain; its full sequence is Ureidoglycolate lyase (166 aa).

This sequence belongs to the ureidoglycolate lyase family. As to quaternary structure, homodimer. The cofactor is Ni(2+).

The enzyme catalyses (S)-ureidoglycolate = urea + glyoxylate. Its pathway is nitrogen metabolism; (S)-allantoin degradation. Catalyzes the catabolism of the allantoin degradation intermediate (S)-ureidoglycolate, generating urea and glyoxylate. Involved in the utilization of allantoin as nitrogen source. The chain is Ureidoglycolate lyase from Rhizobium etli (strain ATCC 51251 / DSM 11541 / JCM 21823 / NBRC 15573 / CFN 42).